Reading from the N-terminus, the 596-residue chain is Elongation factor 4 (596 aa).

The tr-type G domain maps to 2 to 184 (KHIRNFSIIA…TIVAQIPPPE (183 aa)). GTP-binding positions include 14-19 (DHGKST) and 131-134 (NKID).

The protein belongs to the TRAFAC class translation factor GTPase superfamily. Classic translation factor GTPase family. LepA subfamily.

The protein resides in the cell inner membrane. The catalysed reaction is GTP + H2O = GDP + phosphate + H(+). Required for accurate and efficient protein synthesis under certain stress conditions. May act as a fidelity factor of the translation reaction, by catalyzing a one-codon backward translocation of tRNAs on improperly translocated ribosomes. Back-translocation proceeds from a post-translocation (POST) complex to a pre-translocation (PRE) complex, thus giving elongation factor G a second chance to translocate the tRNAs correctly. Binds to ribosomes in a GTP-dependent manner. The polypeptide is Elongation factor 4 (Shewanella loihica (strain ATCC BAA-1088 / PV-4)).